The primary structure comprises 67 residues: Large ribosomal subunit protein bL35 (67 aa).

It belongs to the bacterial ribosomal protein bL35 family.

The polypeptide is Large ribosomal subunit protein bL35 (Deinococcus geothermalis (strain DSM 11300 / CIP 105573 / AG-3a)).